A 772-amino-acid polypeptide reads, in one-letter code: Larval serum protein 1 gamma chain (772 aa).

An N-terminal signal peptide occupies residues 1-16 (MKLTLVILALVACVTA). A glycan (N-linked (GlcNAc...) asparagine) is linked at N242.

This sequence belongs to the hemocyanin family. In terms of assembly, heterohexamer, composed of three subunits, alpha, beta and gamma. Larval hemolymph.

It is found in the secreted. It localises to the extracellular space. Its function is as follows. Larval storage protein (LSP) which may serve as a store of amino acids for synthesis of adult proteins. The sequence is that of Larval serum protein 1 gamma chain (Lsp1gamma) from Drosophila melanogaster (Fruit fly).